The sequence spans 106 residues: Large ribosomal subunit protein bL21c (106 aa).

It belongs to the bacterial ribosomal protein bL21 family. Part of the 50S ribosomal subunit.

It is found in the plastid. The protein resides in the chloroplast. This protein binds to 23S rRNA. The sequence is that of Large ribosomal subunit protein bL21c from Gracilaria tenuistipitata var. liui (Red alga).